We begin with the raw amino-acid sequence, 484 residues long: Probable glycine dehydrogenase (decarboxylating) subunit 2 (484 aa).

K264 carries the post-translational modification N6-(pyridoxal phosphate)lysine.

It belongs to the GcvP family. C-terminal subunit subfamily. In terms of assembly, the glycine cleavage system is composed of four proteins: P, T, L and H. In this organism, the P 'protein' is a heterodimer of two subunits. The cofactor is pyridoxal 5'-phosphate.

The enzyme catalyses N(6)-[(R)-lipoyl]-L-lysyl-[glycine-cleavage complex H protein] + glycine + H(+) = N(6)-[(R)-S(8)-aminomethyldihydrolipoyl]-L-lysyl-[glycine-cleavage complex H protein] + CO2. The glycine cleavage system catalyzes the degradation of glycine. The P protein binds the alpha-amino group of glycine through its pyridoxal phosphate cofactor; CO(2) is released and the remaining methylamine moiety is then transferred to the lipoamide cofactor of the H protein. The polypeptide is Probable glycine dehydrogenase (decarboxylating) subunit 2 (Legionella pneumophila subsp. pneumophila (strain Philadelphia 1 / ATCC 33152 / DSM 7513)).